A 332-amino-acid polypeptide reads, in one-letter code: Myogenic-determination protein (332 aa).

The segment at 22–54 (HNGYGQPTHPGYGFSAYSQQNPIAHPGQNPHQT) is disordered. Residues 161–212 (DRRKAATMRERRRLRKVNEAFEILKRRTSSNPNQRLPKVEILRNAIEYIESL) enclose the bHLH domain. The segment covering 293–309 (TTSPIQNKATPSASDTQ) has biased composition (polar residues). Residues 293 to 332 (TTSPIQNKATPSASDTQSPPSSGATAPTSLHVNFKRKCST) form a disordered region. Over residues 310 to 321 (SPPSSGATAPTS) the composition is skewed to low complexity.

As to quaternary structure, efficient DNA binding requires dimerization with another bHLH protein.

It localises to the nucleus. May play an important role in the early development of muscle. This Drosophila melanogaster (Fruit fly) protein is Myogenic-determination protein (nau).